Consider the following 207-residue polypeptide: Homeobox protein BarH-like 1 (207 aa).

A DNA-binding region (homeobox) is located at residues 95–154 (GRRSRTVFTELQLMGLEKRFEKQKYLSTPDRIDLAESLGLSQLQVKTWYQNRRMKWKKIV). The interval 157–207 (GGGLESPTKPKGRPKKNSIPSSEQLSEQERAKETEKPPESPGEPSERQQEE) is disordered. The segment covering 183–207 (EQERAKETEKPPESPGEPSERQQEE) has biased composition (basic and acidic residues).

The protein belongs to the BAR homeobox family. Expressed predominantly in the facial primordia, developing stomach, and proximal limbs.

The protein resides in the nucleus. Transcription factor, which is involved in craniofacial development, in odontogenic region definition, and in stomach organogenesis. Binds to a regulatory module of the NCAM promoter. This Gallus gallus (Chicken) protein is Homeobox protein BarH-like 1 (BARX1).